The following is a 434-amino-acid chain: Methylenetetrahydrofolate--tRNA-(uracil-5-)-methyltransferase TrmFO (434 aa).

Position 10-15 (10-15 (GAGLAG)) interacts with FAD.

Belongs to the MnmG family. TrmFO subfamily. It depends on FAD as a cofactor.

Its subcellular location is the cytoplasm. It carries out the reaction uridine(54) in tRNA + (6R)-5,10-methylene-5,6,7,8-tetrahydrofolate + NADH + H(+) = 5-methyluridine(54) in tRNA + (6S)-5,6,7,8-tetrahydrofolate + NAD(+). The catalysed reaction is uridine(54) in tRNA + (6R)-5,10-methylene-5,6,7,8-tetrahydrofolate + NADPH + H(+) = 5-methyluridine(54) in tRNA + (6S)-5,6,7,8-tetrahydrofolate + NADP(+). Its function is as follows. Catalyzes the folate-dependent formation of 5-methyl-uridine at position 54 (M-5-U54) in all tRNAs. The sequence is that of Methylenetetrahydrofolate--tRNA-(uracil-5-)-methyltransferase TrmFO from Bacillus cereus (strain AH820).